The chain runs to 609 residues: Ovochymase-2 (609 aa).

The signal sequence occupies residues 1–22 (MPISKDKLILILGMVCLEQGHS). Residues 23–51 (ETLSSIRNPDCGQSLVKPQPQNYFSLFSR) constitute a propeptide, activation peptide. One can recognise a Peptidase S1 domain in the interval 52-299 (IVGGSQVEKG…VLPWILKHIQ (248 aa)). The cysteines at positions 77 and 93 are disulfide-linked. H92 functions as the Charge relay system in the catalytic mechanism. N-linked (GlcNAc...) asparagine glycosylation occurs at N104. Residue E119 participates in Ca(2+) binding. D142 serves as the catalytic Charge relay system. Disulfide bonds link C176–C246, C207–C225, C236–C265, and C311–C341. The active-site Charge relay system is S240. CUB domains are found at residues 311–421 (CSEP…YKAL) and 431–543 (CRSL…ISFI). N356 carries N-linked (GlcNAc...) asparagine glycosylation. An intrachain disulfide couples C365 to C384. N415 is a glycosylation site (N-linked (GlcNAc...) asparagine). Intrachain disulfides connect C431-C458 and C485-C506. N530 and N549 each carry an N-linked (GlcNAc...) asparagine glycan. Positions 580–609 (HTKPPYEEDIGEMPAIDSGLLKQGERRGKH) are disordered.

The protein belongs to the peptidase S1 family. Only expressed in uterus tissue. Expressed in the initial segment (IS) of the caput epididymis, the region most proximal to the testis.

It localises to the secreted. In terms of biological role, may be required for sperm ADAM3 processing and consequential sperm fertilizing ability. In vitro, has an endopeptidase activity. The sequence is that of Ovochymase-2 from Mus musculus (Mouse).